The chain runs to 651 residues: Acetyl-coenzyme A synthetase (651 aa).

CoA is bound by residues 189–192 (RGGK), Thr-311, and Asn-335. Residues 387 to 389 (GEP), 411 to 416 (DTWWQT), Asp-500, and Arg-515 contribute to the ATP site. Ser-523 contacts CoA. ATP is bound at residue Arg-526. Val-537, His-539, and Val-542 together coordinate Mg(2+). Arg-584 is a CoA binding site. Lys-609 carries the post-translational modification N6-acetyllysine.

Belongs to the ATP-dependent AMP-binding enzyme family. Requires Mg(2+) as cofactor. Acetylated. Deacetylation by the SIR2-homolog deacetylase activates the enzyme.

It catalyses the reaction acetate + ATP + CoA = acetyl-CoA + AMP + diphosphate. In terms of biological role, catalyzes the conversion of acetate into acetyl-CoA (AcCoA), an essential intermediate at the junction of anabolic and catabolic pathways. AcsA undergoes a two-step reaction. In the first half reaction, AcsA combines acetate with ATP to form acetyl-adenylate (AcAMP) intermediate. In the second half reaction, it can then transfer the acetyl group from AcAMP to the sulfhydryl group of CoA, forming the product AcCoA. This Rhizobium etli (strain CIAT 652) protein is Acetyl-coenzyme A synthetase.